Consider the following 313-residue polypeptide: Fructose-1,6-bisphosphatase class 1 (313 aa).

4 residues coordinate Mg(2+): Glu90, Asp111, Leu113, and Asp114. Residues 114–117 (DGSS), Tyr222, and Lys253 each bind substrate. A Mg(2+)-binding site is contributed by Glu259.

It belongs to the FBPase class 1 family. Homotetramer. Mg(2+) serves as cofactor.

The protein localises to the cytoplasm. The catalysed reaction is beta-D-fructose 1,6-bisphosphate + H2O = beta-D-fructose 6-phosphate + phosphate. It functions in the pathway carbohydrate biosynthesis; gluconeogenesis. The chain is Fructose-1,6-bisphosphatase class 1 from Geotalea uraniireducens (strain Rf4) (Geobacter uraniireducens).